Here is a 161-residue protein sequence, read N- to C-terminus: Lipoprotein signal peptidase (161 aa).

The next 4 membrane-spanning stretches (helical) occupy residues 8-28, 40-60, 67-87, and 91-111; these read LKYF…KYLA, ITSF…SLLS, QMIM…YLII, and ITEK…LGNF. Catalysis depends on residues Asp122 and Asp140. Residues 136-156 form a helical membrane-spanning segment; that stretch reads FNIADSAITCGVVILIAASLF.

It belongs to the peptidase A8 family.

It localises to the cell inner membrane. The enzyme catalyses Release of signal peptides from bacterial membrane prolipoproteins. Hydrolyzes -Xaa-Yaa-Zaa-|-(S,diacylglyceryl)Cys-, in which Xaa is hydrophobic (preferably Leu), and Yaa (Ala or Ser) and Zaa (Gly or Ala) have small, neutral side chains.. The protein operates within protein modification; lipoprotein biosynthesis (signal peptide cleavage). Functionally, this protein specifically catalyzes the removal of signal peptides from prolipoproteins. The polypeptide is Lipoprotein signal peptidase (Francisella tularensis subsp. tularensis (strain FSC 198)).